Here is a 362-residue protein sequence, read N- to C-terminus: G-protein coupled receptor homolog US27 (362 aa).

Topologically, residues 1-34 are virion surface; the sequence is MTTSTNNQTLTQVSNMTNHTLNSTEIYQLFEYTR. Asparagine 7, asparagine 15, asparagine 18, and asparagine 22 each carry an N-linked (GlcNAc...) asparagine; by host glycan. The helical transmembrane segment at 35–58 threads the bilayer; sequence LGVWLMCIVGTFLNVLVITTILYY. Topologically, residues 59-67 are intravirion; it reads RRKKKSPSD. A helical membrane pass occupies residues 68–90; sequence TYICNLAVADLLIVVGLPFFLEY. Residues 91–104 are Virion surface-facing; sequence AKHHPKLSREVVCS. A helical transmembrane segment spans residues 105–126; that stretch reads GLNACFYICLFAGVCFLINLSM. Over 127–148 the chain is Intravirion; that stretch reads DRYCVIVWGVELNRVRNNKRAT. A helical membrane pass occupies residues 149–167; that stretch reads CWVVIFWILAVLMGMPHYL. Topologically, residues 168–193 are virion surface; sequence MYSHTNNECVGEFANETSGWFPVFLN. Residues 194–213 form a helical membrane-spanning segment; that stretch reads TKVNICGYLAPIALMAYTYN. Residues 214–233 are Intravirion-facing; the sequence is RMVRFIINYVGKWHMQTLHV. The chain crosses the membrane as a helical span at residues 234–257; it reads LLVVVVSFASFWFPFNLALFLESI. Residues 258–274 lie on the Virion surface side of the membrane; it reads RLLAGVYNDTLQNVIIF. Residues 275-298 form a helical membrane-spanning segment; the sequence is CLYVGQFLAYVRACLNPGIYILVG. The Intravirion segment spans residues 299-362; sequence TQMRKDMWTT…MESGEEEFLL (64 aa). The segment at 341 to 362 is disordered; sequence TKRTHYDRKNAPMESGEEEFLL.

This sequence belongs to the G-protein coupled receptor 1 family. As to quaternary structure, heterodimer with US28. Interacts with host Gi alpha-1 subunit GNAI1; this interaction does not lead to the catalytic activation of Gi complex.

The protein resides in the virion. It localises to the host cell membrane. Functionally, interacts with the host Gi complex without activating it, thereby probably interfering with the chemokine-Gi signaling. May also function as a G protein sink to sequester G protein from the cell surface via internalization. Plays an important role in spread of HCMV via the extracellular route. In Homo sapiens (Human), this protein is G-protein coupled receptor homolog US27 (US27).